The sequence spans 344 residues: Uroporphyrinogen decarboxylase (344 aa).

Substrate contacts are provided by residues 27–31 (RQAGR), F46, D76, Y151, S206, and H319.

Belongs to the uroporphyrinogen decarboxylase family. Homodimer.

The protein localises to the cytoplasm. The enzyme catalyses uroporphyrinogen III + 4 H(+) = coproporphyrinogen III + 4 CO2. Its pathway is porphyrin-containing compound metabolism; protoporphyrin-IX biosynthesis; coproporphyrinogen-III from 5-aminolevulinate: step 4/4. Functionally, catalyzes the decarboxylation of four acetate groups of uroporphyrinogen-III to yield coproporphyrinogen-III. In Halalkalibacterium halodurans (strain ATCC BAA-125 / DSM 18197 / FERM 7344 / JCM 9153 / C-125) (Bacillus halodurans), this protein is Uroporphyrinogen decarboxylase.